A 554-amino-acid polypeptide reads, in one-letter code: MSELTIRPEEIRAALEEFVSSYTPDVASREEVGRVTEAGDGIARIEGLPSTMANELLRFEDGTLGLALNLDVREIGAVILGPFEGIEEGQTVKRTGEVLSVPVGDGFLGRVVDPLGRPLDGKGEIVAEGRRALEIQAPSVVQRQPVKEPLQTGIKAIDAMTAIGRGQRELIIGDRQTGKTAVAIDTIINQRANWESGDPKLQVKCIYVAIGQKGSTIAAVRSALEAAGAMEYTTIVAAPASDPAGFKYLAPYTGSAIGQHWMYKGQHALIVFDDLSKQAEAYRAISLLLRRPPGREAYPGDVFYLHSRLLERCAKLSDAMGGGSLTGLPIIETKGNDVSAYIPTNVISITDGQIFLETDLFNSGVRPAINVGISVSRVGGNAQLKAMKQVAGRLRLDLAQYRELEAFAAFGSDLDAASRAQLERGARLVELLKQPQYSPYPVEEQVVSLWAGTTGQLDDVPVTDIRRFERDFLEYVRLRHHGIFDEILKTGELTDNVVESLKLAIAEFKQTFETHDGKILGHEEAPQLDESHLAAEKVRKHVPPSKPTTQRTAG.

ATP is bound at residue Gly-173 to Thr-180. The disordered stretch occupies residues Ser-531–Gly-554.

It belongs to the ATPase alpha/beta chains family. As to quaternary structure, F-type ATPases have 2 components, CF(1) - the catalytic core - and CF(0) - the membrane proton channel. CF(1) has five subunits: alpha(3), beta(3), gamma(1), delta(1), epsilon(1). CF(0) has three main subunits: a(1), b(2) and c(9-12). The alpha and beta chains form an alternating ring which encloses part of the gamma chain. CF(1) is attached to CF(0) by a central stalk formed by the gamma and epsilon chains, while a peripheral stalk is formed by the delta and b chains.

It is found in the cell membrane. The catalysed reaction is ATP + H2O + 4 H(+)(in) = ADP + phosphate + 5 H(+)(out). In terms of biological role, produces ATP from ADP in the presence of a proton gradient across the membrane. The alpha chain is a regulatory subunit. This is ATP synthase subunit alpha from Acidothermus cellulolyticus (strain ATCC 43068 / DSM 8971 / 11B).